A 310-amino-acid chain; its full sequence is ADP-L-glycero-D-manno-heptose-6-epimerase (310 aa).

Residues leucine 10–isoleucine 11, aspartate 31–asparagine 32, lysine 38, lysine 53, glutamate 75–serine 79, and asparagine 92 each bind NADP(+). Tyrosine 140 (proton acceptor) is an active-site residue. Lysine 144 provides a ligand contact to NADP(+). Asparagine 169 provides a ligand contact to substrate. Positions 170 and 178 each coordinate NADP(+). Lysine 178 serves as the catalytic Proton acceptor. Residues serine 180, histidine 187, phenylalanine 201 to serine 204, arginine 209, and tyrosine 272 each bind substrate.

Belongs to the NAD(P)-dependent epimerase/dehydratase family. HldD subfamily. As to quaternary structure, homopentamer. Requires NADP(+) as cofactor.

It catalyses the reaction ADP-D-glycero-beta-D-manno-heptose = ADP-L-glycero-beta-D-manno-heptose. Its pathway is nucleotide-sugar biosynthesis; ADP-L-glycero-beta-D-manno-heptose biosynthesis; ADP-L-glycero-beta-D-manno-heptose from D-glycero-beta-D-manno-heptose 7-phosphate: step 4/4. Its function is as follows. Catalyzes the interconversion between ADP-D-glycero-beta-D-manno-heptose and ADP-L-glycero-beta-D-manno-heptose via an epimerization at carbon 6 of the heptose. The sequence is that of ADP-L-glycero-D-manno-heptose-6-epimerase from Erwinia tasmaniensis (strain DSM 17950 / CFBP 7177 / CIP 109463 / NCPPB 4357 / Et1/99).